We begin with the raw amino-acid sequence, 547 residues long: Cytochrome P450 monooxygenase oblB (547 aa).

Transmembrane regions (helical) follow at residues 42–62 and 242–262; these read GAVGAIYAIYISGLVIYRLFL and FDMFHLGAVSLPLFMGMPWLI. Asn-277 carries an N-linked (GlcNAc...) asparagine glycan. Residues 345 to 365 form a helical membrane-spanning segment; that stretch reads VLIGSGTMTTAGTMGFLCYYI. Cys-489 is a heme binding site.

The protein belongs to the cytochrome P450 family. Heme is required as a cofactor.

It is found in the membrane. It catalyses the reaction ophiobolin F + 4 reduced [NADPH--hemoprotein reductase] + 4 O2 = ophiobolin C + 4 oxidized [NADPH--hemoprotein reductase] + 6 H2O + 4 H(+). The protein operates within secondary metabolite biosynthesis; terpenoid biosynthesis. In terms of biological role, cytochrome P450 monooxygenase; part of the gene cluster that mediates the biosynthesis of the sesterterpenes ophiobolins, fungal phytotoxins with potential anti-cancer activities. The first step of the pathway is performed by the sesterterpene synthase oblA that possesses both prenyl transferase and terpene cyclase activity, converting isopentenyl diphosphate and dimethylallyl diphosphate into geranylfarnesyl diphosphate (GFPP) and further converting GFPP into ophiobolin F, respectively. Other sesterterpenoids (C(25) terpenoids) are found as minor products of oblA. The cytochrome P450 monooxygenase oblB then catalyzes a four-step oxidative transformation of ophiobolin F to yield ophiobolin C. The function of the cytochrome P450 monooxygenase oblE has still to be determined. In Emericella variicolor (Aspergillus stellatus), this protein is Cytochrome P450 monooxygenase oblB.